We begin with the raw amino-acid sequence, 183 residues long: Cell division protein SepF (183 aa).

Residues 13–58 (MHDDDDFDDDYEDYDDDFDEDYEDDKPSARKRLFTGSSKKDSVADE) form a disordered region. The span at 16-36 (DDDFDDDYEDYDDDFDEDYED) shows a compositional bias: acidic residues.

The protein belongs to the SepF family. In terms of assembly, homodimer. Interacts with FtsZ.

It localises to the cytoplasm. Cell division protein that is part of the divisome complex and is recruited early to the Z-ring. Probably stimulates Z-ring formation, perhaps through the cross-linking of FtsZ protofilaments. Its function overlaps with FtsA. This is Cell division protein SepF from Lachnospira eligens (strain ATCC 27750 / DSM 3376 / VPI C15-48 / C15-B4) (Eubacterium eligens).